Reading from the N-terminus, the 911-residue chain is Isoleucine--tRNA ligase (911 aa).

The 'HIGH' region motif lies at 57–67 (PYANGDIHMGH). Glu-551 is a binding site for L-isoleucyl-5'-AMP. The 'KMSKS' region motif lies at 592–596 (KMSKS). Lys-595 lines the ATP pocket. Cys-881, Cys-884, Cys-901, and Cys-904 together coordinate Zn(2+).

It belongs to the class-I aminoacyl-tRNA synthetase family. IleS type 1 subfamily. In terms of assembly, monomer. Zn(2+) is required as a cofactor.

It is found in the cytoplasm. The catalysed reaction is tRNA(Ile) + L-isoleucine + ATP = L-isoleucyl-tRNA(Ile) + AMP + diphosphate. Its function is as follows. Catalyzes the attachment of isoleucine to tRNA(Ile). As IleRS can inadvertently accommodate and process structurally similar amino acids such as valine, to avoid such errors it has two additional distinct tRNA(Ile)-dependent editing activities. One activity is designated as 'pretransfer' editing and involves the hydrolysis of activated Val-AMP. The other activity is designated 'posttransfer' editing and involves deacylation of mischarged Val-tRNA(Ile). This chain is Isoleucine--tRNA ligase, found in Exiguobacterium sibiricum (strain DSM 17290 / CCUG 55495 / CIP 109462 / JCM 13490 / 255-15).